The chain runs to 376 residues: Probable inactive protein kinase At3g63330 (376 aa).

Residues 1–370 enclose the Protein kinase domain; the sequence is MVERGPTVYL…VDEALQHPYF (370 aa).

It belongs to the protein kinase superfamily. Ser/Thr protein kinase family.

This chain is Probable inactive protein kinase At3g63330, found in Arabidopsis thaliana (Mouse-ear cress).